The sequence spans 161 residues: Non-secretory ribonuclease (161 aa).

The first 27 residues, 1 to 27 (MVPKLFTSQICLLLLLGLMGVEGSLHA), serve as a signal peptide directing secretion. Residue W34 is glycosylated (C-linked (Man) tryptophan). The active-site Proton acceptor is H42. N44 is a glycosylation site (N-linked (GlcNAc...) asparagine). Intrachain disulfides connect C50–C110, C64–C123, C82–C138, and C89–C98. Y60 carries the 3'-nitrotyrosine modification. 65 to 69 (KNQNT) provides a ligand contact to substrate. N86, N92, N111, and N119 each carry an N-linked (GlcNAc...) asparagine glycan. The active-site Proton donor is H156.

This sequence belongs to the pancreatic ribonuclease family. Interacts with and forms a tight 1:1 complex with RNH1. Dimerization of two such complexes may occur.

The protein resides in the lysosome. It is found in the cytoplasmic granule. It carries out the reaction an [RNA] containing cytidine + H2O = an [RNA]-3'-cytidine-3'-phosphate + a 5'-hydroxy-ribonucleotide-3'-[RNA].. It catalyses the reaction an [RNA] containing uridine + H2O = an [RNA]-3'-uridine-3'-phosphate + a 5'-hydroxy-ribonucleotide-3'-[RNA].. In terms of biological role, this is a non-secretory ribonuclease. It is a pyrimidine specific nuclease with a slight preference for U. Cytotoxin and helminthotoxin. Possesses a wide variety of biological activities. The sequence is that of Non-secretory ribonuclease (RNASE2) from Nomascus leucogenys (Northern white-cheeked gibbon).